The following is a 275-amino-acid chain: Putative methylglyoxal reductase DkgA (275 aa).

The active-site Proton donor is the Y51. H107 provides a ligand contact to substrate. 187 to 241 lines the NADP(+) pocket; it reads SPLAQGGEGVFDQKVIRELADKYGKTPAQIVIRWHLDCGLVVIPKSVTPSRIAEN.

It belongs to the aldo/keto reductase family. Monomer.

The protein resides in the cytoplasm. It catalyses the reaction hydroxyacetone + NADP(+) = methylglyoxal + NADPH + H(+). In terms of biological role, aldo-keto reductase that significantly contributes to cellular methylglyoxal detoxification by catalyzing the NADPH-dependent conversion of methylglyoxal to acetol. The sequence is that of Putative methylglyoxal reductase DkgA from Salmonella typhi.